Consider the following 86-residue polypeptide: MIOREX complex component 7 (86 aa).

Associates with the mitochondrial ribosome.

The protein localises to the mitochondrion. Component of MIOREX complexes, large expressome-like assemblies of ribosomes with factors involved in all the steps of post-transcriptional gene expression. This is MIOREX complex component 7 from Saccharomyces cerevisiae (strain ATCC 204508 / S288c) (Baker's yeast).